Reading from the N-terminus, the 270-residue chain is Formamidopyrimidine-DNA glycosylase (270 aa).

The active-site Schiff-base intermediate with DNA is P2. Residue E3 is the Proton donor of the active site. K58 serves as the catalytic Proton donor; for beta-elimination activity. The DNA site is built by H91, R110, and K151. The FPG-type zinc finger occupies 236–270 (FVYGRGGEACKVCGTELRNVVLGQRASVFCPRCQR). Residue R260 is the Proton donor; for delta-elimination activity of the active site.

It belongs to the FPG family. Monomer. Zn(2+) is required as a cofactor.

The enzyme catalyses Hydrolysis of DNA containing ring-opened 7-methylguanine residues, releasing 2,6-diamino-4-hydroxy-5-(N-methyl)formamidopyrimidine.. It catalyses the reaction 2'-deoxyribonucleotide-(2'-deoxyribose 5'-phosphate)-2'-deoxyribonucleotide-DNA = a 3'-end 2'-deoxyribonucleotide-(2,3-dehydro-2,3-deoxyribose 5'-phosphate)-DNA + a 5'-end 5'-phospho-2'-deoxyribonucleoside-DNA + H(+). Its function is as follows. Involved in base excision repair of DNA damaged by oxidation or by mutagenic agents. Acts as a DNA glycosylase that recognizes and removes damaged bases. Has a preference for oxidized purines, such as 7,8-dihydro-8-oxoguanine (8-oxoG). Has AP (apurinic/apyrimidinic) lyase activity and introduces nicks in the DNA strand. Cleaves the DNA backbone by beta-delta elimination to generate a single-strand break at the site of the removed base with both 3'- and 5'-phosphates. The chain is Formamidopyrimidine-DNA glycosylase from Pseudomonas fluorescens (strain SBW25).